A 974-amino-acid polypeptide reads, in one-letter code: Zinc finger protein 280D (974 aa).

Residues Lys44, Lys46, Lys86, Lys99, Lys138, Lys201, Lys222, Lys245, Lys287, and Lys304 each participate in a glycyl lysine isopeptide (Lys-Gly) (interchain with G-Cter in SUMO2) cross-link. The interval 188 to 216 is disordered; sequence KRPSGSDISSVNPKKPKPSENTSGIDASS. 2 C2H2-type zinc fingers span residues 333–355 and 370–393; these read FKCF…MKHH and TTCQ…ESTH. Residues 400–424 form a C2H2-type 3; degenerate zinc finger; sequence TICKICELSFETEQILLQHMKDNHK. C2H2-type zinc fingers lie at residues 430–453 and 459–481; these read YICQ…RTSH and LLCP…YMKH. Disordered regions lie at residues 507 to 624, 751 to 797, and 815 to 974; these read TQHH…KVNT, IKTE…EGTG, and VTVS…EERS. The span at 539–557 shows a compositional bias: low complexity; it reads SGSSVTPSISPSTSTLQLS. At Ser557 the chain carries Phosphoserine. Over residues 571–587 the composition is skewed to polar residues; that stretch reads KLTTSTPNTTISDPSKA. The segment covering 591–611 has biased composition (low complexity); that stretch reads KSNGSKSKNKSKVSNMQKKQS. A compositionally biased stretch (polar residues) spans 612–624; sequence TLSSSNKKSKVNT. Lys752 is covalently cross-linked (Glycyl lysine isopeptide (Lys-Gly) (interchain with G-Cter in SUMO2)). Basic and acidic residues predominate over residues 763–775; sequence VSKETARHSRAEG. Residues 817–829 show a composition bias toward polar residues; sequence VSDTENVSSSKNI. Positions 830 to 860 are enriched in basic and acidic residues; it reads LSHDPDVGTDTMEKEEKTHHACQEMELKVDQ. Positions 861-884 are enriched in polar residues; the sequence is SSESTNPTEAELSSETRQGLQLTS. 2 positions are modified to phosphoserine: Ser904 and Ser907. Polar residues predominate over residues 938 to 950; sequence SANTSDTVSDQTG.

It localises to the nucleus. May function as a transcription factor. The sequence is that of Zinc finger protein 280D (Znf280d) from Mus musculus (Mouse).